We begin with the raw amino-acid sequence, 32 residues long: Snake venom serine proteinase (32 aa).

The Peptidase S1 domain occupies 1-32; sequence VIGGDECDINEHRFLVFLTXASGLACGGTLIN.

Belongs to the peptidase S1 family. Snake venom subfamily. In terms of assembly, monomer. Contains 6 disulfide bonds. In terms of processing, glycosylated. As to expression, expressed by the venom gland.

The protein localises to the secreted. Cleaves a kininogen analog with the release of kallidin (lysyl-bradykinin). Completely cleaves fibrinogen Aalpha chain, partially cleaves Bbeta chain and has no activity on gamma chain. The polypeptide is Snake venom serine proteinase (Bitis arietans (African puff adder)).